The following is an 893-amino-acid chain: TBC domain-containing protein kinase-like protein (893 aa).

In terms of domain architecture, Protein kinase spans 1–274 (MFPLRDTEMG…EELMHDHLFS (274 aa)). One can recognise a Rab-GAP TBC domain in the interval 466 to 651 (DIPPLLRGIT…HLWDTLLLGN (186 aa)). The region spanning 790–889 (SKPKLLVVDI…IKPTGLLTVP (100 aa)) is the Rhodanese domain.

Belongs to the protein kinase superfamily. As to quaternary structure, component of the FERRY complex.

It localises to the cytoplasm. The protein resides in the cytoskeleton. The protein localises to the spindle. Its subcellular location is the midbody. It is found in the early endosome. In terms of biological role, component of the FERRY complex (Five-subunit Endosomal Rab5 and RNA/ribosome intermediary). The FERRY complex directly interacts with mRNAs and RAB5A, and functions as a RAB5A effector involved in the localization and the distribution of specific mRNAs most likely by mediating their endosomal transport. The complex recruits mRNAs and ribosomes to early endosomes through direct mRNA-interaction. Also involved in the modulation of mTOR signaling and expression of mTOR complex components. Involved in the control of actin-cytoskeleton organization. The sequence is that of TBC domain-containing protein kinase-like protein from Gallus gallus (Chicken).